Here is a 249-residue protein sequence, read N- to C-terminus: Cysteine-rich secretory protein 1 (249 aa).

The N-terminal stretch at 1–20 (MEIKHLLFLVAAACLLPVLS) is a signal peptide. One can recognise an SCP domain in the interval 45–175 (VNIHNTLRRG…SPRYFYVCHY (131 aa)). The N-linked (GlcNAc...) asparagine glycan is linked to Asn-104. 5 cysteine pairs are disulfide-bonded: Cys-195–Cys-202, Cys-198–Cys-207, Cys-211–Cys-244, Cys-220–Cys-238, and Cys-229–Cys-242. The 34-residue stretch at 211–244 (CIYYDEYTDCSLEVRFLGCNHSTPRMFCKATCLC) folds into the ShKT domain. Residue Asn-230 is glycosylated (N-linked (GlcNAc...) asparagine).

It belongs to the CRISP family. In terms of tissue distribution, expressed in all the regions of the epididymis except the caput and is not detected in the testis, prostate, seminal vesicle, and brain.

In terms of biological role, may have a role in sperm-egg fusion and maturation. This Macaca mulatta (Rhesus macaque) protein is Cysteine-rich secretory protein 1 (CRISP1).